The primary structure comprises 353 residues: Inactive ubiquitin thioesterase OTULINL (353 aa).

Residues Met-1–Lys-80 are required for membrane binding. In terms of domain architecture, OTU spans Lys-125–Phe-353.

The protein belongs to the peptidase C65 family. Otulin subfamily. In terms of assembly, does not bind ubiquitin or ubiquitin-like proteins.

Its subcellular location is the cytoplasm. The protein localises to the endoplasmic reticulum membrane. It localises to the nucleus envelope. Lacks deubiquitinase activity. The protein is Inactive ubiquitin thioesterase OTULINL of Rattus norvegicus (Rat).